Here is a 114-residue protein sequence, read N- to C-terminus: Flagellar hook-basal body complex protein FliE (114 aa).

The protein belongs to the FliE family.

It is found in the bacterial flagellum basal body. This Burkholderia vietnamiensis (strain G4 / LMG 22486) (Burkholderia cepacia (strain R1808)) protein is Flagellar hook-basal body complex protein FliE.